The sequence spans 129 residues: Iron-sulfur cluster assembly 1 homolog, mitochondrial (129 aa).

Residues 1 to 12 (MSASLVRATVRA) constitute a mitochondrion transit peptide. Positions 57, 121, and 123 each coordinate Fe cation.

The protein belongs to the HesB/IscA family. In terms of assembly, interacts with CRY2, but not with CRY1 (in vitro).

The protein localises to the mitochondrion. Involved in the maturation of mitochondrial 4Fe-4S proteins functioning late in the iron-sulfur cluster assembly pathway. Probably involved in the binding of an intermediate of Fe/S cluster assembly. The polypeptide is Iron-sulfur cluster assembly 1 homolog, mitochondrial (ISCA1) (Bos taurus (Bovine)).